The primary structure comprises 188 residues: GMP synthase [glutamine-hydrolyzing] subunit A (188 aa).

The region spanning 1-188 (MIVILDNGGQ…FCKVCGYKFE (188 aa)) is the Glutamine amidotransferase type-1 domain. Catalysis depends on C76, which acts as the Nucleophile. Residues H163 and E165 contribute to the active site.

As to quaternary structure, heterodimer composed of a glutamine amidotransferase subunit (A) and a GMP-binding subunit (B).

It carries out the reaction XMP + L-glutamine + ATP + H2O = GMP + L-glutamate + AMP + diphosphate + 2 H(+). It functions in the pathway purine metabolism; GMP biosynthesis; GMP from XMP (L-Gln route): step 1/1. Catalyzes the synthesis of GMP from XMP. This is GMP synthase [glutamine-hydrolyzing] subunit A from Methanocaldococcus jannaschii (strain ATCC 43067 / DSM 2661 / JAL-1 / JCM 10045 / NBRC 100440) (Methanococcus jannaschii).